Here is a 340-residue protein sequence, read N- to C-terminus: Anthranilate phosphoribosyltransferase (340 aa).

5-phospho-alpha-D-ribose 1-diphosphate is bound by residues glycine 78, glycine 81–aspartate 82, threonine 86, asparagine 88–threonine 91, lysine 106–serine 114, and serine 118. An anthranilate-binding site is contributed by glycine 78. Serine 90 serves as a coordination point for Mg(2+). Residue asparagine 109 participates in anthranilate binding. Position 164 (arginine 164) interacts with anthranilate. Mg(2+) contacts are provided by aspartate 223 and glutamate 224.

This sequence belongs to the anthranilate phosphoribosyltransferase family. As to quaternary structure, homodimer. It depends on Mg(2+) as a cofactor.

It carries out the reaction N-(5-phospho-beta-D-ribosyl)anthranilate + diphosphate = 5-phospho-alpha-D-ribose 1-diphosphate + anthranilate. Its pathway is amino-acid biosynthesis; L-tryptophan biosynthesis; L-tryptophan from chorismate: step 2/5. Catalyzes the transfer of the phosphoribosyl group of 5-phosphorylribose-1-pyrophosphate (PRPP) to anthranilate to yield N-(5'-phosphoribosyl)-anthranilate (PRA). The protein is Anthranilate phosphoribosyltransferase of Bacillus pumilus (strain SAFR-032).